A 219-amino-acid polypeptide reads, in one-letter code: Dephospho-CoA kinase (219 aa).

The DPCK domain occupies 8 to 215 (LVGVTGGIGS…EAAASGPDCQ (208 aa)). Residue 16 to 21 (GSGKST) coordinates ATP.

It belongs to the CoaE family.

It localises to the cytoplasm. It carries out the reaction 3'-dephospho-CoA + ATP = ADP + CoA + H(+). Its pathway is cofactor biosynthesis; coenzyme A biosynthesis; CoA from (R)-pantothenate: step 5/5. Catalyzes the phosphorylation of the 3'-hydroxyl group of dephosphocoenzyme A to form coenzyme A. This chain is Dephospho-CoA kinase, found in Chlorobium luteolum (strain DSM 273 / BCRC 81028 / 2530) (Pelodictyon luteolum).